The following is a 113-amino-acid chain: U11-theraphotoxin-Hhn1a (113 aa).

The first 21 residues, M1–A21, serve as a signal peptide directing secretion. The propeptide occupies D22–R74. Positions L59–N69 are enriched in basic and acidic residues. The disordered stretch occupies residues L59–D83. 3 disulfide bridges follow: C75-C90, C82-C95, and C89-C110.

It belongs to the neurotoxin 14 (magi-1) family. 01 (HNTX-16) subfamily. In terms of tissue distribution, expressed by the venom gland.

It is found in the secreted. Functionally, probable ion channel inhibitor. The protein is U11-theraphotoxin-Hhn1a of Cyriopagopus hainanus (Chinese bird spider).